Reading from the N-terminus, the 282-residue chain is Nucleotide-binding protein Fnod_1159 (282 aa).

Residue 9 to 16 (GHSGAGKS) participates in ATP binding. A GTP-binding site is contributed by 57 to 60 (DIRS).

It belongs to the RapZ-like family.

Functionally, displays ATPase and GTPase activities. In Fervidobacterium nodosum (strain ATCC 35602 / DSM 5306 / Rt17-B1), this protein is Nucleotide-binding protein Fnod_1159.